Reading from the N-terminus, the 509-residue chain is Poly(A) RNA polymerase GLD2-B (509 aa).

A disordered region spans residues 88-125; that stretch reads PGSPPSSFQNRKRRSDEGNSPYDVKRQRFQSPQEQTVN. Positions 116-125 are enriched in polar residues; it reads FQSPQEQTVN. Mg(2+) is bound by residues D240 and D242. In terms of domain architecture, PAP-associated spans 409-462; it reads LGDLLLGFLKYFAVEFDWSKDIISLREAKALPRTDDYEWRNKYICVEEPFDGSN.

It belongs to the DNA polymerase type-B-like family. GLD2 subfamily. In terms of assembly, component of a complex at least composed of cpeb1, cpsf1, tent2/gld2, pabpc1/ePAB, parn and sympk. Following oocyte maturation, parn is expelled from the complex. Interacts with rbfox2. Interacts with sympk. It depends on Mg(2+) as a cofactor. Mn(2+) serves as cofactor.

It localises to the cytoplasm. The enzyme catalyses RNA(n) + ATP = RNA(n)-3'-adenine ribonucleotide + diphosphate. Cytoplasmic poly(A) RNA polymerase that adds successive AMP monomers to the 3'-end of specific RNAs, forming a poly(A) tail. In contrast to the canonical nuclear poly(A) RNA polymerase, it only adds poly(A) to selected cytoplasmic mRNAs during oocyte maturation. Plays a central role during oocyte maturation by mediating polyadenylation of dormant mRNAs, which contain 5'AAUAAA-3' sequence in their 3'-UTR. In immature oocytes, polyadenylation of poly(A) tails is counteracted by the ribonuclease parn. During maturation parn is excluded from the ribonucleoprotein complex, allowing poly(A) elongation and activation of mRNAs. May not play a role in replication-dependent histone mRNA degradation. This chain is Poly(A) RNA polymerase GLD2-B, found in Xenopus laevis (African clawed frog).